We begin with the raw amino-acid sequence, 577 residues long: Arginine--tRNA ligase (577 aa).

Residues 122–132 carry the 'HIGH' region motif; it reads PNVAKEMHVGH.

The protein belongs to the class-I aminoacyl-tRNA synthetase family. In terms of assembly, monomer.

Its subcellular location is the cytoplasm. The catalysed reaction is tRNA(Arg) + L-arginine + ATP = L-arginyl-tRNA(Arg) + AMP + diphosphate. This Escherichia coli O157:H7 (strain EC4115 / EHEC) protein is Arginine--tRNA ligase.